The chain runs to 129 residues: Small ribosomal subunit protein uS11 (129 aa).

It belongs to the universal ribosomal protein uS11 family. In terms of assembly, part of the 30S ribosomal subunit. Interacts with proteins S7 and S18. Binds to IF-3.

In terms of biological role, located on the platform of the 30S subunit, it bridges several disparate RNA helices of the 16S rRNA. Forms part of the Shine-Dalgarno cleft in the 70S ribosome. The sequence is that of Small ribosomal subunit protein uS11 from Chelativorans sp. (strain BNC1).